A 228-amino-acid chain; its full sequence is 2-C-methyl-D-erythritol 4-phosphate cytidylyltransferase (228 aa).

It belongs to the IspD/TarI cytidylyltransferase family. IspD subfamily.

The enzyme catalyses 2-C-methyl-D-erythritol 4-phosphate + CTP + H(+) = 4-CDP-2-C-methyl-D-erythritol + diphosphate. It functions in the pathway isoprenoid biosynthesis; isopentenyl diphosphate biosynthesis via DXP pathway; isopentenyl diphosphate from 1-deoxy-D-xylulose 5-phosphate: step 2/6. Functionally, catalyzes the formation of 4-diphosphocytidyl-2-C-methyl-D-erythritol from CTP and 2-C-methyl-D-erythritol 4-phosphate (MEP). This Trichormus variabilis (strain ATCC 29413 / PCC 7937) (Anabaena variabilis) protein is 2-C-methyl-D-erythritol 4-phosphate cytidylyltransferase.